The following is a 337-amino-acid chain: Beta-hexosaminidase (337 aa).

Substrate-binding positions include Asp-62, Arg-70, Arg-133, and 163–164 (KH). His-176 serves as the catalytic Proton donor/acceptor. Asp-248 acts as the Nucleophile in catalysis.

Belongs to the glycosyl hydrolase 3 family. NagZ subfamily.

It is found in the cytoplasm. The catalysed reaction is Hydrolysis of terminal non-reducing N-acetyl-D-hexosamine residues in N-acetyl-beta-D-hexosaminides.. Its pathway is cell wall biogenesis; peptidoglycan recycling. In terms of biological role, plays a role in peptidoglycan recycling by cleaving the terminal beta-1,4-linked N-acetylglucosamine (GlcNAc) from peptide-linked peptidoglycan fragments, giving rise to free GlcNAc, anhydro-N-acetylmuramic acid and anhydro-N-acetylmuramic acid-linked peptides. This chain is Beta-hexosaminidase, found in Psychromonas ingrahamii (strain DSM 17664 / CCUG 51855 / 37).